Reading from the N-terminus, the 313-residue chain is Pyrimidine-specific ribonucleoside hydrolase RihB (313 aa).

Residue aspartate 11 is the Proton acceptor of the active site. Residues aspartate 11, aspartate 16, and valine 124 each contribute to the Ca(2+) site. Glutamine 227 and histidine 239 together coordinate substrate. Aspartate 240 serves as a coordination point for Ca(2+).

This sequence belongs to the IUNH family. RihB subfamily. Homotetramer. Requires Ca(2+) as cofactor.

The enzyme catalyses a pyrimidine ribonucleoside + H2O = a pyrimidine nucleobase + D-ribose. Functionally, hydrolyzes cytidine or uridine to ribose and cytosine or uracil, respectively. Has a clear preference for cytidine over uridine. Strictly specific for ribonucleosides. This Escherichia coli O17:K52:H18 (strain UMN026 / ExPEC) protein is Pyrimidine-specific ribonucleoside hydrolase RihB.